A 182-amino-acid chain; its full sequence is Transcription termination/antitermination protein NusG (182 aa).

A KOW domain is found at 131 to 163; the sequence is VGEQVRIKSGPFANQVGEVQEIEADKFKLTVLV.

Belongs to the NusG family.

Its function is as follows. Participates in transcription elongation, termination and antitermination. The polypeptide is Transcription termination/antitermination protein NusG (Staphylococcus carnosus (strain TM300)).